A 101-amino-acid chain; its full sequence is Venom protein 214 (101 aa).

The N-terminal stretch at 1-16 is a signal peptide; sequence MIRYVLVIITCFLVAA.

Contains 3 disulfide bonds. Expressed by the venom gland.

The protein localises to the secreted. This Lychas mucronatus (Chinese swimming scorpion) protein is Venom protein 214.